Reading from the N-terminus, the 2495-residue chain is MEVLQCDGCDFRAPSYEDLKAHIQDVHTAFLQPTDVAEDNDDEPLSGSMNASNQTEVEFSSIKDEFVIAEDLPGQSATALGSGGYYGHSPGYYGQHITPNPKPTNKFFQCKFCVRYFRSKNLLIEHTRKVHGAQAEESPTGPPVPGSLNYNIMMHEGFGKVFSCQFCTYKSPRRARIIKHQKMYHKNSLKESTAPPPAPAPLPDPLVPPVSLQDPCKELPAEVVERSILESMVKPLTKSRGNFCCEWCSYQTPRRERWCDHMMKKHRSMVKILSSIRQQEGPNVSEAQNDNEPSPTSNSTYLSMNAASREMPNANVSNFRGSMGNSIMRPNSSSTSKFSSSMSYPQMKPKSPHNSGLVNLTERSRYGMSDMTNSSADLDTNSMLNDSSSDEDLNEVDSENGLSVLDHQASGLSAEQLMGSDGNKLLETKGIPFRRFMNRFQCPFCPFLTMHRRSISRHIENIHLSGKTAVYKCDECPFTCKSSLKLGAHKQCHTGTSDWDTVNSQSESLSSSLNEGMVSYESSSINGRKSGVMLDPLQQQQPPQPPPPLPPPPPPPSQPLPQPPPPPLQSPHQVPPPTQQPQPPTQAPPLHPYKCTMCSYSTMTLKGLRVHQQHKHSFCDNLPKFEGQPSSLPLENETDSHPSSSNTVKKSQTSILGLSSKNNFVAKANRKLASDFPLDLSPVKKRTRIDEIASNLQSKINQTKLQEDAIINVEDDEEEEDDNEVEIEVELDREEEATDPIMEVPTAFSAQQIWARDASEAQKEPNYRSITHDYTATNGAEIELTLSEDEEDYYGSSASMKDQVSNAALLNTQPAIYGTEPSNENTDFGDSGRLYYCKHCDFNNKSARSVSTHYQRMHPYIKFSFRYILDPNDHSAVYRCLECYIDYTNFEDLQQHYGEHHPEAMNVLNFDHSDLIYRCRFCSYTSPNVRSLMPHYQRMHPTVKINNAMIFSSYVVEQQEGLNAESQTLREILNSAPKSMATSTPVARGGGLPATFNKNTPPKTFTPECESQKDPSVNTVVVYDCDVCSFASPNMHSVLVHYQKKHPEEKASYFRIQKTMRMVSVDRGSALSQLSFEVGAPMSPKMSNMGSPPPPQPPPPDLSIELYYCKHCSYSNRSVVGVLVHYQKRHPEIKVTAKYIRQAPPTAAMMRGAEGLQDSPRPPAPLQLNSSERDCPPVETEMFFCQHCDYGNRTVKGVLIHYQKKHRDFKANADVIRQHTATIRSLCDRNQKPASCVLLPASGMERDKTKLRALKCRQCSYTSPYFYALRKHIKKDHPALKATVTSIMRWAFLDGLIEAGYHCEWCIYSHMEPSGLLLHYQRRHPEHYVDYTYMATKLWAGPDPSSPTLTMSAEAKTYRCRDCVFEAVSIWDITNHYQAFHPWAMNGDESVLLDIIKEKDGVDKALLAPEELIGPVNCENSIPNPLPEQEAECPEDARLSPEKSIHLASANPAISSTPYQCTVCQSEYNNLHGLLTHYGKKHPGMKVKAADFAQDIDINPGAVYKCRHCPYINTRIHGVLTHYQKRHPAIKVTAEDFVHDVEQSADISQNDVEETSRIFKQGYGAYRCKLCPYTHGTLEKLKIHYEKYHNQPEFDVFSPPPPKLPVSLEPEITTEVSPSQVSVTEEEVGEDPMSTAHFSTSHLVSHTVFRCQLCKYFCSTRKGIARHYRIKHNNVRAQPEGKNNLFKCALCAYTNPIRKGLAAHYQKRHDIDAYYTHCLAASRTISDKPNKVIIPSPPKDDSPQLSEELRRAVEKKKCSLCSFQSFSKKGIVSHYMKRHPGVFPKKQHASKLGGYFTAVYADEHEKPPLMEEEERSSFERAEVEGEAQDIEWLPFRCIKCFKLSFSTAELLCMHYTDHHSRDLKRDFVILGSGPRFQNSTFQCKHCDSKLQSIAELTSHLNIHNEEFQKRAKRQERRKQLLSKQKYADGAFADFKQERPFGHLEEVPKIKERKVVGYKCKFCVEVHPTLRAICNHLRKHVQYGSVPAVSAAVKGLRSHERSHLALAMFTREDKYSCQYCSFVSAFRHNLDRHMQTHHGHHKPFRCKLCSFKSSYNSRLKTHILKAHAGEHAYKCSWCSFSTMTISQLKEHSLKVHGKALTLPRPRIVSLLSSHAHPSSQKATPAEEVEDSNDSSYSEPPDVQQQLNHYQSAALARNKSRVSPVPPSGTAAGTEQKAEAVLHCEFCEFSSGYIQSIRRHYRDKHGGKKLFKCKDCSFYTGFKSAFTMHVEAGHSAVPEEGPKDLRCPLCLYHTKYKRNMIDHIVLHREERVVPIEVCRSKLSKYLQGVVFRCDKCTFTCSSDESLQQHIEKHNELKPYKCQLCYYETKHTEELDTHLRDEHKVSRNFELVGRVNLDQLEQMKEKIESSSSEDEDKDDEMSSKAEDRELMRFADRGPGVNTEKRFPCEFCGRAFSQGSEWERHVLRHGMSLHDTNQVSRNEIHTKEMVEESMQLPSIEAKEDDEPIGIDFPLKSETVTICVVAADKSLLEDAEAKNE.

3 consecutive C2H2-type zinc fingers follow at residues 4–27 (LQCDGCDFRAPSYEDLKAHIQDVH), 108–131 (FQCKFCVRYFRSKNLLIEHTRKVH), and 162–185 (FSCQFCTYKSPRRARIIKHQKMYH). Residue lysine 20 forms a Glycyl lysine isopeptide (Lys-Gly) (interchain with G-Cter in SUMO1); alternate linkage. Lysine 20 participates in a covalent cross-link: Glycyl lysine isopeptide (Lys-Gly) (interchain with G-Cter in SUMO2); alternate. The segment at 215 to 241 (PCKELPAEVVERSILESMVKPLTKSRG) is interaction with PBX1. Glycyl lysine isopeptide (Lys-Gly) (interchain with G-Cter in SUMO2) cross-links involve residues lysine 234 and lysine 271. 3 disordered regions span residues 278-301 (QQEGPNVSEAQNDNEPSPTSNSTY), 329-357 (RPNSSSTSKFSSSMSYPQMKPKSPHNSGL), and 370-395 (DMTNSSADLDTNSMLNDSSSDEDLNE). Residues 332–343 (SSSTSKFSSSMS) show a composition bias toward low complexity. Glycyl lysine isopeptide (Lys-Gly) (interchain with G-Cter in SUMO2) cross-links involve residues lysine 337, lysine 348, and lysine 350. 2 positions are modified to phosphoserine: serine 351 and serine 355. Positions 370 to 387 (DMTNSSADLDTNSMLNDS) are enriched in polar residues. Lysine 429 is covalently cross-linked (Glycyl lysine isopeptide (Lys-Gly) (interchain with G-Cter in SUMO2)). 2 C2H2-type zinc fingers span residues 440–463 (FQCPFCPFLTMHRRSISRHIENIH) and 471–493 (YKCDECPFTCKSSLKLGAHKQCH). A Glycyl lysine isopeptide (Lys-Gly) (interchain with G-Cter in SUMO2) cross-link involves residue lysine 485. The disordered stretch occupies residues 492–590 (CHTGTSDWDT…PQPPTQAPPL (99 aa)). Polar residues predominate over residues 493-502 (HTGTSDWDTV). The span at 503 to 515 (NSQSESLSSSLNE) shows a compositional bias: low complexity. A compositionally biased stretch (pro residues) spans 542–590 (PPQPPPPLPPPPPPPSQPLPQPPPPPLQSPHQVPPPTQQPQPPTQAPPL). The C2H2-type 6 zinc finger occupies 593-616 (YKCTMCSYSTMTLKGLRVHQQHKH). Glycyl lysine isopeptide (Lys-Gly) (interchain with G-Cter in SUMO2) cross-links involve residues lysine 624, lysine 650, and lysine 661. The segment at 629–654 (PSSLPLENETDSHPSSSNTVKKSQTS) is disordered. Polar residues predominate over residues 641-654 (HPSSSNTVKKSQTS). Serine 681 is subject to Phosphoserine. Lysine 699 participates in a covalent cross-link: Glycyl lysine isopeptide (Lys-Gly) (interchain with G-Cter in SUMO2). 3 C2H2-type zinc fingers span residues 835–858 (YYCKHCDFNNKSARSVSTHYQRMH), 878–900 (YRCLECYIDYTNFEDLQQHYGEH), and 917–940 (YRCRFCSYTSPNVRSLMPHYQRMH). Lysine 978 participates in a covalent cross-link: Glycyl lysine isopeptide (Lys-Gly) (interchain with G-Cter in SUMO2). A disordered region spans residues 980–999 (MATSTPVARGGGLPATFNKN). Residues 1023–1046 (YDCDVCSFASPNMHSVLVHYQKKH) form a C2H2-type 10 zinc finger. Serine 1083 bears the Phosphoserine mark. A Glycyl lysine isopeptide (Lys-Gly) (interchain with G-Cter in SUMO2) cross-link involves residue lysine 1128. Position 1159 is a phosphoserine (serine 1159). Glycyl lysine isopeptide (Lys-Gly) (interchain with G-Cter in SUMO2) cross-links involve residues lysine 1196, lysine 1204, lysine 1210, and lysine 1232. 2 C2H2-type zinc fingers span residues 1254–1277 (LKCRQCSYTSPYFYALRKHIKKDH) and 1459–1482 (YQCTVCQSEYNNLHGLLTHYGKKH). Lysine 1488 is covalently cross-linked (Glycyl lysine isopeptide (Lys-Gly) (interchain with G-Cter in SUMO2)). Residues 1504 to 1527 (YKCRHCPYINTRIHGVLTHYQKRH) form a C2H2-type 13 zinc finger. Glycyl lysine isopeptide (Lys-Gly) (interchain with G-Cter in SUMO2) cross-links involve residues lysine 1560 and lysine 1580. C2H2-type zinc fingers lie at residues 1566-1589 (YRCKLCPYTHGTLEKLKIHYEKYH), 1649-1672 (FRCQLCKYFCSTRKGIARHYRIKH), and 1686-1709 (FKCALCAYTNPIRKGLAAHYQKRH). Residues lysine 1687 and lysine 1769 each participate in a glycyl lysine isopeptide (Lys-Gly) (interchain with G-Cter in SUMO2) cross-link. A C2H2-type 17 zinc finger spans residues 1881–1903 (FQCKHCDSKLQSIAELTSHLNIH). Lysine 1935 is covalently cross-linked (Glycyl lysine isopeptide (Lys-Gly) (interchain with G-Cter in SUMO2)). A C2H2-type 18; degenerate zinc finger spans residues 1957 to 1981 (YKCKFCVEVHPTLRAICNHLRKHVQ). Lysine 1993 bears the N6-methyllysine mark. C2H2-type zinc fingers lie at residues 2014-2037 (YSCQYCSFVSAFRHNLDRHMQTHH), 2043-2066 (FRCKLCSFKSSYNSRLKTHILKAH), and 2072-2095 (YKCSWCSFSTMTISQLKEHSLKVH). Lysine 2093 is covalently cross-linked (Glycyl lysine isopeptide (Lys-Gly) (interchain with G-Cter in SUMO2)). Composition is skewed to polar residues over residues 2112–2121 (SHAHPSSQKA) and 2132–2149 (DSSYSEPPDVQQQLNHYQ). The segment at 2112–2172 (SHAHPSSQKA…VPPSGTAAGT (61 aa)) is disordered. Phosphoserine occurs at positions 2161 and 2166. C2H2-type zinc fingers lie at residues 2180–2203 (LHCEFCEFSSGYIQSIRRHYRDKH), 2209–2232 (FKCKDCSFYTGFKSAFTMHVEAGH), and 2243–2265 (LRCPLCLYHTKYKRNMIDHIVLH). Lysine 2282 participates in a covalent cross-link: Glycyl lysine isopeptide (Lys-Gly) (interchain with G-Cter in SUMO2). 2 consecutive C2H2-type zinc fingers follow at residues 2289-2311 (FRCDKCTFTCSSDESLQQHIEKH) and 2317-2340 (YKCQLCYYETKHTEELDTHLRDEH). The disordered stretch occupies residues 2361–2387 (KEKIESSSSEDEDKDDEMSSKAEDREL). A compositionally biased stretch (basic and acidic residues) spans 2377–2387 (EMSSKAEDREL). A C2H2-type 27 zinc finger spans residues 2403 to 2425 (FPCEFCGRAFSQGSEWERHVLRH). Residue lysine 2493 forms a Glycyl lysine isopeptide (Lys-Gly) (interchain with G-Cter in SUMO2) linkage.

Interacts with PBX1 isoform PBX1b; this interaction prevents PBX1-HOXA9 heterodimer from forming and binding to DNA. Expressed in the cerebral cortex (at protein level). Expressed in embryonic stem cells (at protein level). Expressed in heart, liver, kidney, muscle, and female and male genital tracts (at protein level).

It localises to the nucleus. In terms of biological role, zinc finger nuclear factor involved in transcription by regulating chromatin structure and organization. Involved in the pluripotency and differentiation of embryonic stem cells by regulating SOX2, POU5F1/OCT4, and NANOG. By binding PBX1, prevents the heterodimerization of PBX1 and HOXA9 and their binding to DNA. Regulates neuronal development and neural cell differentiation. This is Zinc finger protein 462 from Mus musculus (Mouse).